Consider the following 624-residue polypeptide: MTNPKEKTPMCLVNELARFNRIQPQYKLLDERGPAHSKLFTVQLTLGEQTWQAESTSIKKAQHAAASLALSETTLPKPAARQTKNHMNNNPEAAELHGNTFTSSRHSAKGSITPTVELNGLAMRRGEPAIYRSLDPKPLPNQRANYNYRGMYHQRYLCPMLKTFYVQLTVGNSEFYGEGKTRQAARHNAALKALHALRNEPIPERSSLNGEANRGPEEDKDANKSEISLVFEISLKRNLSLSFEVIKESGPPHMKSFVTRVTVGEFTAEGEGNSKKLAKRRAAAAVLQELRKLPPLPVIEKPRIYIKRRPKNIIKASPEYGQGMNPISRLAQIQQAKKEKEPEYVLLSERGIQRRREFVMQVKVGEETATGTGPNKKTAKRNAAEAMLLQLGYKASSPVVEKTGKRGENPDWDEQNSGIADQTSTPKGILHLSPDVYQEMEASRNKTVPAPAISYLSSKEMNQASSSFFSTSVSQSCTAAIARELLTNGTSPTAEAIGFTGKNLMCHSSTVQPSKQLEYLAGIQGLQVNYSDRQSGNDFLTCLTLSPVQMTFHGIGSSLEASHDQAALSALKQFSEQGLDSVDGSLMAENGPFEQAKLRGEKADNKQANSGTIAQDCKDSKAVV.

DRBM domains are found at residues 55–122 (STSI…NGLA), 142–228 (QRAN…SEIS), 254–321 (MKSF…PEYG), 354–422 (RRRE…IADQ), and 540–604 (LTCL…EKAD). Residues 197-223 (LRNEPIPERSSLNGEANRGPEEDKDAN) form a disordered region. A compositionally biased stretch (basic and acidic residues) spans 214–223 (RGPEEDKDAN). Disordered regions lie at residues 401–428 (EKTG…TPKG) and 592–624 (PFEQ…KAVV). Over residues 415–426 (QNSGIADQTSTP) the composition is skewed to polar residues. A compositionally biased stretch (basic and acidic residues) spans 596 to 605 (AKLRGEKADN).

In terms of biological role, RNA-binding protein required for the microtubule-dependent transport of RNAs within polarized cell types. The polypeptide is Double-stranded RNA-binding protein Staufen homolog 2 (stau2) (Xenopus tropicalis (Western clawed frog)).